The following is a 558-amino-acid chain: uncharacterized protein (558 aa).

Residues 531–558 (NEDDGTSASPTAMTFDMPPEHPFYSHYR) are disordered.

This is an uncharacterized protein from Saccharomyces cerevisiae (strain ATCC 204508 / S288c) (Baker's yeast).